Here is a 213-residue protein sequence, read N- to C-terminus: Uridine kinase (213 aa).

14–21 is an ATP binding site; the sequence is GASASGKS.

The protein belongs to the uridine kinase family.

Its subcellular location is the cytoplasm. The catalysed reaction is uridine + ATP = UMP + ADP + H(+). It catalyses the reaction cytidine + ATP = CMP + ADP + H(+). Its pathway is pyrimidine metabolism; CTP biosynthesis via salvage pathway; CTP from cytidine: step 1/3. It participates in pyrimidine metabolism; UMP biosynthesis via salvage pathway; UMP from uridine: step 1/1. The protein is Uridine kinase of Vibrio vulnificus (strain CMCP6).